The sequence spans 225 residues: Uracil-DNA glycosylase (225 aa).

The active-site Proton acceptor is the D65.

Belongs to the uracil-DNA glycosylase (UDG) superfamily. UNG family.

It is found in the cytoplasm. It catalyses the reaction Hydrolyzes single-stranded DNA or mismatched double-stranded DNA and polynucleotides, releasing free uracil.. Its function is as follows. Excises uracil residues from the DNA which can arise as a result of misincorporation of dUMP residues by DNA polymerase or due to deamination of cytosine. This Lysinibacillus sphaericus (strain C3-41) protein is Uracil-DNA glycosylase.